We begin with the raw amino-acid sequence, 89 residues long: Elongation factor 1-beta (89 aa).

It belongs to the EF-1-beta/EF-1-delta family.

Its function is as follows. Promotes the exchange of GDP for GTP in EF-1-alpha/GDP, thus allowing the regeneration of EF-1-alpha/GTP that could then be used to form the ternary complex EF-1-alpha/GTP/AAtRNA. This chain is Elongation factor 1-beta (ef1b), found in Methanocaldococcus jannaschii (strain ATCC 43067 / DSM 2661 / JAL-1 / JCM 10045 / NBRC 100440) (Methanococcus jannaschii).